A 278-amino-acid polypeptide reads, in one-letter code: Potassium/proton antiporter CemA (278 aa).

4 helical membrane-spanning segments follow: residues Ile-61–Gly-81, Ala-155–Thr-175, Ile-203–Ile-223, and Phe-238–Ile-258.

It belongs to the CemA family.

It localises to the plastid. The protein localises to the chloroplast inner membrane. The catalysed reaction is K(+)(in) + H(+)(out) = K(+)(out) + H(+)(in). In terms of biological role, contributes to K(+)/H(+) antiport activity by supporting proton efflux to control proton extrusion and homeostasis in chloroplasts in a light-dependent manner to modulate photosynthesis. Prevents excessive induction of non-photochemical quenching (NPQ) under continuous-light conditions. Indirectly promotes efficient inorganic carbon uptake into chloroplasts. The polypeptide is Potassium/proton antiporter CemA (Porphyra purpurea (Red seaweed)).